The sequence spans 162 residues: NADH-quinone oxidoreductase subunit I (162 aa).

4Fe-4S ferredoxin-type domains follow at residues 52 to 82 (LRRY…IEAG) and 93 to 122 (TRYD…EGPN). 8 residues coordinate [4Fe-4S] cluster: Cys62, Cys65, Cys68, Cys72, Cys102, Cys105, Cys108, and Cys112.

The protein belongs to the complex I 23 kDa subunit family. NDH-1 is composed of 14 different subunits. Subunits NuoA, H, J, K, L, M, N constitute the membrane sector of the complex. [4Fe-4S] cluster serves as cofactor.

The protein resides in the cell inner membrane. It carries out the reaction a quinone + NADH + 5 H(+)(in) = a quinol + NAD(+) + 4 H(+)(out). Functionally, NDH-1 shuttles electrons from NADH, via FMN and iron-sulfur (Fe-S) centers, to quinones in the respiratory chain. The immediate electron acceptor for the enzyme in this species is believed to be ubiquinone. Couples the redox reaction to proton translocation (for every two electrons transferred, four hydrogen ions are translocated across the cytoplasmic membrane), and thus conserves the redox energy in a proton gradient. The polypeptide is NADH-quinone oxidoreductase subunit I (Methylorubrum populi (strain ATCC BAA-705 / NCIMB 13946 / BJ001) (Methylobacterium populi)).